Here is a 275-residue protein sequence, read N- to C-terminus: MVGANIYNTHNIHDPNNLNNLNNINNPNNITNNMHNPHNIFQNNYFDPKQLKILVDNMTPQDLELLLTLSCKKGIIRDVEYILCRIMREMINININYGLCQAIENYHLKIVELLIDHGADINYNNGLPLNLAVKNGYYDIIELLIEKKVNTNDNIFQLLTHCCQNNLPNSLRILLKENISIDPIYSTMVNLCLDNGYAECASILINHNNSDSTINSESMIHDTNLTTSQTLLELDDLLELDDLLDGNDYFNYNQDESDVGDDAENDIENDIEDDN.

4 ANK repeats span residues 94 to 123 (NINY…DINY), 124 to 153 (NNGL…NTND), 155 to 183 (IFQL…SIDP), and 184 to 213 (IYST…SDST). The segment at 253–275 (NQDESDVGDDAENDIENDIEDDN) is disordered. Over residues 255–275 (DESDVGDDAENDIENDIEDDN) the composition is skewed to acidic residues.

This chain is Putative ankyrin repeat protein L715, found in Acanthamoeba polyphaga mimivirus (APMV).